We begin with the raw amino-acid sequence, 213 residues long: Neuromodulin (213 aa).

Residues 1-213 (MLCCIRRTKP…AEEAGKDQNV (213 aa)) form a disordered region. Residues cysteine 3 and cysteine 4 are each lipidated (S-palmitoyl cysteine). Residues 9 to 33 (KPVEKNEEADQEIKQDGTKPEENAH) are compositionally biased toward basic and acidic residues. In terms of domain architecture, IQ spans 32–61 (AHKAATKIQASFRGHITRKKMKDEDKDGEN). Residues 57 to 73 (KDGENDTAPDESAETEE) show a composition bias toward acidic residues. Residues 74-86 (KEERVSPSEEKPV) are compositionally biased toward basic and acidic residues. Over residues 102-122 (PNSPAAEAPPTAATDSAPSDT) the composition is skewed to low complexity. Positions 157–169 (EKEEEEEEEEEEE) are enriched in acidic residues. Over residues 191-213 (QTDKKEALDDSKPAEEAGKDQNV) the composition is skewed to basic and acidic residues.

The protein belongs to the neuromodulin family. As to quaternary structure, binds calmodulin with a greater affinity in the absence of Ca(2+) than in its presence. In terms of processing, palmitoylated. Palmitoylation is essential for plasma membrane association.

It localises to the cell membrane. It is found in the cell projection. The protein localises to the growth cone membrane. Its subcellular location is the synapse. The protein resides in the filopodium membrane. Its function is as follows. This protein is associated with nerve growth. It is a major component of the motile 'growth cones' that form the tips of elongating axons. Plays a role in axonal and dendritic filopodia induction. This chain is Neuromodulin (gap43), found in Carassius auratus (Goldfish).